Reading from the N-terminus, the 333-residue chain is Adenosine deaminase (333 aa).

Zn(2+)-binding residues include H12 and H14. 3 residues coordinate substrate: H14, D16, and G170. A Zn(2+)-binding site is contributed by H197. The Proton donor role is filled by E200. Residue D278 participates in Zn(2+) binding. D279 serves as a coordination point for substrate.

The protein belongs to the metallo-dependent hydrolases superfamily. Adenosine and AMP deaminases family. Adenosine deaminase subfamily. Requires Zn(2+) as cofactor.

The enzyme catalyses adenosine + H2O + H(+) = inosine + NH4(+). It carries out the reaction 2'-deoxyadenosine + H2O + H(+) = 2'-deoxyinosine + NH4(+). Functionally, catalyzes the hydrolytic deamination of adenosine and 2-deoxyadenosine. The polypeptide is Adenosine deaminase (Escherichia coli (strain SMS-3-5 / SECEC)).